The chain runs to 500 residues: Glucose-6-phosphate 1-dehydrogenase (500 aa).

NADP(+)-binding positions include 18-25 (GASGDLSK), Arg-52, and Lys-155. D-glucose 6-phosphate is bound by residues Lys-155, 185–189 (HYLGK), Glu-223, and Asp-242. His-247 functions as the Proton acceptor in the catalytic mechanism. Lys-338 contributes to the NADP(+) binding site. D-glucose 6-phosphate is bound at residue Lys-341. 3 residues coordinate NADP(+): Lys-347, Arg-351, and Arg-373. Residue Gln-375 coordinates D-glucose 6-phosphate. NADP(+) is bound by residues 381-383 (YFK), 401-403 (DLT), and Tyr-483.

This sequence belongs to the glucose-6-phosphate dehydrogenase family.

Its subcellular location is the cytoplasm. It localises to the cytosol. It carries out the reaction D-glucose 6-phosphate + NADP(+) = 6-phospho-D-glucono-1,5-lactone + NADPH + H(+). It participates in carbohydrate degradation; pentose phosphate pathway; D-ribulose 5-phosphate from D-glucose 6-phosphate (oxidative stage): step 1/3. Its function is as follows. Catalyzes the rate-limiting step of the oxidative pentose-phosphate pathway, which represents a route for the dissimilation of carbohydrates besides glycolysis. The main function of this enzyme is to provide reducing power (NADPH) and pentose phosphates for fatty acid and nucleic acid synthesis. The protein is Glucose-6-phosphate 1-dehydrogenase of Schizosaccharomyces pombe (strain 972 / ATCC 24843) (Fission yeast).